A 378-amino-acid polypeptide reads, in one-letter code: tRNA N(3)-cytidine methyltransferase METTL2B (378 aa).

N-acetylalanine is present on Ala-2. Ser-4 carries the phosphoserine modification. Residues Trp-78 and Tyr-82 each coordinate S-adenosyl-L-methionine. Position 154 is a phosphothreonine (Thr-154). Residues Gly-188, Asp-213, Asp-239, Leu-240, and Ile-260 each coordinate S-adenosyl-L-methionine.

Belongs to the methyltransferase superfamily. METL family. Monomer. Interacts with DALRD3.

The protein resides in the cytoplasm. It carries out the reaction cytidine(32) in tRNA(Thr) + S-adenosyl-L-methionine = N(3)-methylcytidine(32) in tRNA(Thr) + S-adenosyl-L-homocysteine + H(+). The enzyme catalyses cytidine(32) in tRNA(Arg)(CCU) + S-adenosyl-L-methionine = N(3)-methylcytidine(32) in tRNA(Arg)(CCU) + S-adenosyl-L-homocysteine + H(+). In terms of biological role, S-adenosyl-L-methionine-dependent methyltransferase that mediates N(3)-methylcytidine modification of residue 32 of the tRNA anticodon loop of tRNA(Thr)(UGU) and tRNA(Arg)(CCU). The protein is tRNA N(3)-cytidine methyltransferase METTL2B of Homo sapiens (Human).